A 65-amino-acid chain; its full sequence is KNRPTFCNLLPETGRCNALIPAFYYNSHLHKCQKFNYGGCGGNANNFKTIDECQRTCAAKYGRSS.

Residues 7 to 57 (CNLLPETGRCNALIPAFYYNSHLHKCQKFNYGGCGGNANNFKTIDECQRTC) form the BPTI/Kunitz inhibitor domain. Intrachain disulfides connect C7/C57, C16/C40, and C32/C53.

Belongs to the venom Kunitz-type family. In terms of tissue distribution, expressed by the venom gland.

It localises to the secreted. Dual-function toxin that inhibits both serine proteases (high activity on chymotrypsin (Ki = 18 nM), and low activity on elastase) and voltage-gated potassium channels Kv1.3/KCNA3 (IC(50) = 120.0 nM). This Bungarus fasciatus (Banded krait) protein is Kunitz-type serine protease inhibitor IX.